The chain runs to 343 residues: Protein RecA (343 aa).

64 to 71 (GPESSGKT) provides a ligand contact to ATP.

This sequence belongs to the RecA family.

It localises to the cytoplasm. In terms of biological role, can catalyze the hydrolysis of ATP in the presence of single-stranded DNA, the ATP-dependent uptake of single-stranded DNA by duplex DNA, and the ATP-dependent hybridization of homologous single-stranded DNAs. It interacts with LexA causing its activation and leading to its autocatalytic cleavage. The polypeptide is Protein RecA (Cereibacter sphaeroides (strain ATCC 17023 / DSM 158 / JCM 6121 / CCUG 31486 / LMG 2827 / NBRC 12203 / NCIMB 8253 / ATH 2.4.1.) (Rhodobacter sphaeroides)).